A 101-amino-acid polypeptide reads, in one-letter code: Small ribosomal subunit protein uS14 (101 aa).

The interval 44–74 (ASRKLSRLPRDSSPVRLRNRDQVDGRPRGYV) is disordered. Residues 61–70 (RNRDQVDGRP) show a composition bias toward basic and acidic residues.

This sequence belongs to the universal ribosomal protein uS14 family. As to quaternary structure, part of the 30S ribosomal subunit. Contacts proteins S3 and S10.

Its function is as follows. Binds 16S rRNA, required for the assembly of 30S particles and may also be responsible for determining the conformation of the 16S rRNA at the A site. The protein is Small ribosomal subunit protein uS14 of Cutibacterium acnes (strain DSM 16379 / KPA171202) (Propionibacterium acnes).